A 946-amino-acid chain; its full sequence is Glycine dehydrogenase (decarboxylating) (946 aa).

An N6-(pyridoxal phosphate)lysine modification is found at lysine 700.

It belongs to the GcvP family. The glycine cleavage system is composed of four proteins: P, T, L and H. Requires pyridoxal 5'-phosphate as cofactor.

The enzyme catalyses N(6)-[(R)-lipoyl]-L-lysyl-[glycine-cleavage complex H protein] + glycine + H(+) = N(6)-[(R)-S(8)-aminomethyldihydrolipoyl]-L-lysyl-[glycine-cleavage complex H protein] + CO2. In terms of biological role, the glycine cleavage system catalyzes the degradation of glycine. The P protein binds the alpha-amino group of glycine through its pyridoxal phosphate cofactor; CO(2) is released and the remaining methylamine moiety is then transferred to the lipoamide cofactor of the H protein. The sequence is that of Glycine dehydrogenase (decarboxylating) from Pseudomonas fluorescens (strain SBW25).